Reading from the N-terminus, the 829-residue chain is Periplasmic nitrate reductase (829 aa).

The tat-type signal signal peptide spans methionine 1–alanine 29. A 4Fe-4S Mo/W bis-MGD-type domain is found at isoleucine 41–aspartate 97. 4 residues coordinate [4Fe-4S] cluster: cysteine 48, cysteine 51, cysteine 55, and cysteine 83. Residues lysine 85, glutamine 152, asparagine 177, cysteine 181, tryptophan 214 to methionine 221, serine 245 to histidine 249, glutamine 264 to aspartate 266, methionine 374, glutamine 378, asparagine 484, serine 510 to aspartate 511, lysine 533, aspartate 560, and threonine 718 to threonine 727 contribute to the Mo-bis(molybdopterin guanine dinucleotide) site. Phenylalanine 794 serves as a coordination point for substrate. Mo-bis(molybdopterin guanine dinucleotide) is bound by residues asparagine 802 and lysine 819.

Belongs to the prokaryotic molybdopterin-containing oxidoreductase family. NasA/NapA/NarB subfamily. Component of the periplasmic nitrate reductase NapAB complex composed of NapA and NapB. Requires [4Fe-4S] cluster as cofactor. Mo-bis(molybdopterin guanine dinucleotide) is required as a cofactor. In terms of processing, predicted to be exported by the Tat system. The position of the signal peptide cleavage has not been experimentally proven.

It localises to the periplasm. The enzyme catalyses 2 Fe(II)-[cytochrome] + nitrate + 2 H(+) = 2 Fe(III)-[cytochrome] + nitrite + H2O. Its function is as follows. Catalytic subunit of the periplasmic nitrate reductase complex NapAB. Receives electrons from NapB and catalyzes the reduction of nitrate to nitrite. This chain is Periplasmic nitrate reductase, found in Vibrio atlanticus (strain LGP32) (Vibrio splendidus (strain Mel32)).